The sequence spans 508 residues: Probable malate:quinone oxidoreductase (508 aa).

This sequence belongs to the MQO family. The cofactor is FAD.

The catalysed reaction is (S)-malate + a quinone = a quinol + oxaloacetate. Its pathway is carbohydrate metabolism; tricarboxylic acid cycle; oxaloacetate from (S)-malate (quinone route): step 1/1. The protein is Probable malate:quinone oxidoreductase of Chromohalobacter salexigens (strain ATCC BAA-138 / DSM 3043 / CIP 106854 / NCIMB 13768 / 1H11).